Here is a 260-residue protein sequence, read N- to C-terminus: Electron transfer flavoprotein subunit beta (260 aa).

This sequence belongs to the ETF beta-subunit/FixA family. As to quaternary structure, heterodimer of an alpha and a beta subunit. It depends on FAD as a cofactor. Requires AMP as cofactor.

Functionally, the electron transfer flavoprotein serves as a specific electron acceptor for other dehydrogenases. It transfers the electrons to the main respiratory chain via ETF-ubiquinone oxidoreductase (ETF dehydrogenase). In Thermoanaerobacterium thermosaccharolyticum (strain ATCC 7956 / DSM 571 / NCIMB 9385 / NCA 3814 / NCTC 13789 / WDCM 00135 / 2032) (Clostridium thermosaccharolyticum), this protein is Electron transfer flavoprotein subunit beta (etfB).